Consider the following 680-residue polypeptide: Zinc finger protein 334 (680 aa).

Positions 10-81 (VSFQDLTVNF…EEFSNQNYPD (72 aa)) constitute a KRAB domain. C2H2-type zinc fingers lie at residues 237–259 (NECN…QRIH), 265–287 (YVCS…RRIH), 293–315 (YECS…QKIH), 321–343 (YECN…FRSH), 349–371 (YECK…QRTH), 377–399 (NECK…QRIH), 405–427 (YECS…RRSH), 433–455 (YECS…QITH), 461–483 (YECN…QRTH), 544–566 (YECN…QRTH), 572–594 (YECN…QRTH), 600–622 (YECN…RRIH), 628–650 (YECN…QKIH), and 656–678 (YECN…QKSH).

This sequence belongs to the krueppel C2H2-type zinc-finger protein family.

The protein resides in the nucleus. Functionally, may be involved in transcriptional regulation. The chain is Zinc finger protein 334 (ZNF334) from Homo sapiens (Human).